The sequence spans 348 residues: NADH-ubiquinone oxidoreductase chain 2 (348 aa).

The next 9 helical transmembrane spans lie at 13–33 (VGLG…WMGL), 60–80 (FLTQ…NAWM), 93–113 (IAST…PMHF), 149–169 (IDPL…GWGG), 178–197 (ILAY…IQYA), 202–219 (LIAL…FLTL), 246–266 (LVLL…KWLI), 274–294 (DLPI…YFYL), and 326–346 (LALF…ILML).

Belongs to the complex I subunit 2 family.

The protein resides in the mitochondrion inner membrane. It carries out the reaction a ubiquinone + NADH + 5 H(+)(in) = a ubiquinol + NAD(+) + 4 H(+)(out). Functionally, core subunit of the mitochondrial membrane respiratory chain NADH dehydrogenase (Complex I) that is believed to belong to the minimal assembly required for catalysis. Complex I functions in the transfer of electrons from NADH to the respiratory chain. The immediate electron acceptor for the enzyme is believed to be ubiquinone. The polypeptide is NADH-ubiquinone oxidoreductase chain 2 (MT-ND2) (Cyprinus carpio (Common carp)).